The following is a 453-amino-acid chain: Phosphoglucosamine mutase (453 aa).

Ser-100 (phosphoserine intermediate) is an active-site residue. The Mg(2+) site is built by Ser-100, Asp-239, Asp-241, and Asp-243. Ser-100 is subject to Phosphoserine.

This sequence belongs to the phosphohexose mutase family. It depends on Mg(2+) as a cofactor. Post-translationally, activated by phosphorylation.

The catalysed reaction is alpha-D-glucosamine 1-phosphate = D-glucosamine 6-phosphate. In terms of biological role, catalyzes the conversion of glucosamine-6-phosphate to glucosamine-1-phosphate. The polypeptide is Phosphoglucosamine mutase (Buchnera aphidicola subsp. Baizongia pistaciae (strain Bp)).